The sequence spans 294 residues: Putative glucose-6-phosphate 1-epimerase (294 aa).

Substrate-binding residues include Arg-74 and Arg-99. Residue His-164 is part of the active site. Asp-208 provides a ligand contact to substrate. Glu-267 is an active-site residue.

The protein belongs to the glucose-6-phosphate 1-epimerase family. Monomer in solution.

It carries out the reaction alpha-D-glucose 6-phosphate = beta-D-glucose 6-phosphate. Functionally, probably functions as a hexose-6-phosphate 1-epimerase. This chain is Putative glucose-6-phosphate 1-epimerase, found in Salmonella typhimurium (strain LT2 / SGSC1412 / ATCC 700720).